Consider the following 482-residue polypeptide: UDP-sulfoquinovose synthase, chloroplastic (482 aa).

The N-terminal 61 residues, 1 to 61, are a transit peptide targeting the chloroplast; the sequence is MAHLLSTSCS…NNTQKLTVVR (61 aa). Residues 100 to 101, 120 to 124, 163 to 164, Arg-189, and Asn-207 each bind NAD(+); these read YC, DNLVR, and DI. Residue Arg-189 coordinates substrate. Residues Thr-233 and Tyr-270 each contribute to the substrate site. Thr-233 is a catalytic residue. NAD(+) contacts are provided by Tyr-270 and Lys-274. Tyr-270 serves as the catalytic Proton acceptor. Residue Lys-274 is part of the active site. Position 297 (Gln-297) interacts with substrate. Val-300 is an NAD(+) binding site. Substrate-binding positions include 327-330, 342-344, and 415-417; these read ALNR, TVY, and RVE.

The protein belongs to the NAD(P)-dependent epimerase/dehydratase family. In terms of assembly, homodimer. Interacts with FdGOGAT (via FMN-binding domain). Requires NAD(+) as cofactor. The N-terminus is blocked.

Its subcellular location is the plastid. It is found in the chloroplast stroma. The enzyme catalyses sulfite + UDP-alpha-D-glucose + H(+) = UDP-alpha-D-6-sulfoquinovose + H2O. Functionally, involved in the biosynthesis of sulfolipids found in thylakoid membranes. Converts UDP-glucose and sulfite to the sulfolipid head group precursor UDP-sulfoquinovose. The sulfite is delivered to the reaction center by the FMN-binding domain of FdGOGAT. The chain is UDP-sulfoquinovose synthase, chloroplastic (SQD1) from Spinacia oleracea (Spinach).